Here is a 321-residue protein sequence, read N- to C-terminus: tRNA U34 carboxymethyltransferase (321 aa).

Residues K90, W104, K109, G129, 151 to 153 (DPT), 180 to 181 (IE), M195, Y199, and R314 contribute to the carboxy-S-adenosyl-L-methionine site.

The protein belongs to the class I-like SAM-binding methyltransferase superfamily. CmoB family. As to quaternary structure, homotetramer.

The catalysed reaction is carboxy-S-adenosyl-L-methionine + 5-hydroxyuridine(34) in tRNA = 5-carboxymethoxyuridine(34) in tRNA + S-adenosyl-L-homocysteine + H(+). Functionally, catalyzes carboxymethyl transfer from carboxy-S-adenosyl-L-methionine (Cx-SAM) to 5-hydroxyuridine (ho5U) to form 5-carboxymethoxyuridine (cmo5U) at position 34 in tRNAs. The chain is tRNA U34 carboxymethyltransferase from Mannheimia succiniciproducens (strain KCTC 0769BP / MBEL55E).